Here is a 133-residue protein sequence, read N- to C-terminus: Holo-[acyl-carrier-protein] synthase (133 aa).

D8 and E57 together coordinate Mg(2+).

The protein belongs to the P-Pant transferase superfamily. AcpS family. Mg(2+) is required as a cofactor.

It localises to the cytoplasm. The enzyme catalyses apo-[ACP] + CoA = holo-[ACP] + adenosine 3',5'-bisphosphate + H(+). Transfers the 4'-phosphopantetheine moiety from coenzyme A to a Ser of acyl-carrier-protein. This is Holo-[acyl-carrier-protein] synthase from Caulobacter vibrioides (strain ATCC 19089 / CIP 103742 / CB 15) (Caulobacter crescentus).